Reading from the N-terminus, the 114-residue chain is Iron-sulfur cluster insertion protein ErpA (114 aa).

C42, C106, and C108 together coordinate iron-sulfur cluster.

The protein belongs to the HesB/IscA family. In terms of assembly, homodimer. Iron-sulfur cluster serves as cofactor.

In terms of biological role, required for insertion of 4Fe-4S clusters for at least IspG. The chain is Iron-sulfur cluster insertion protein ErpA from Wigglesworthia glossinidia brevipalpis.